The following is a 336-amino-acid chain: MSAQIIAIDAMGGDFGPRSIVQASIACLSATPSLHLTLVGQPSLLEDLVSGLAAADRARLQIVAASEVIGMDERPSQALRGKPDSSMRIALELVRDGKAQACVSAGNTGALMALSRFVLKTLPGIDRPAMVAAIPTQAGYCQLLDLGANVDCSAENLYQFAVMGSVAAQALGVHRPRVALLNIGTEDIKGNQQVKLAASLLQNARGLNYVGFVEGDGLYRGEADVVVCDGFVGNILLKSSEGLATMIGARIEQLFKGGVLSRAAGAVAMPLLKRLQADLAPARHNGASFLGLQGIVIKSHGSAGVQGFQSAIQRALIEIQENLPQRLHGRLEDLLL.

Belongs to the PlsX family. In terms of assembly, homodimer. Probably interacts with PlsY.

It is found in the cytoplasm. The enzyme catalyses a fatty acyl-[ACP] + phosphate = an acyl phosphate + holo-[ACP]. It participates in lipid metabolism; phospholipid metabolism. Functionally, catalyzes the reversible formation of acyl-phosphate (acyl-PO(4)) from acyl-[acyl-carrier-protein] (acyl-ACP). This enzyme utilizes acyl-ACP as fatty acyl donor, but not acyl-CoA. The chain is Phosphate acyltransferase from Pseudomonas putida (strain GB-1).